A 376-amino-acid polypeptide reads, in one-letter code: UDP-N-acetylglucosamine 2-epimerase (376 aa).

Substrate-binding positions include Arg10, Lys15, Asp95, Glu117, His213, Gln271, Phe276, 290-292 (SGG), Glu296, and Arg313.

The protein belongs to the UDP-N-acetylglucosamine 2-epimerase family. Homodimer.

It is found in the cytoplasm. It catalyses the reaction UDP-N-acetyl-alpha-D-glucosamine = UDP-N-acetyl-alpha-D-mannosamine. It participates in bacterial outer membrane biogenesis; enterobacterial common antigen biosynthesis. Its function is as follows. Catalyzes the reversible epimerization at C-2 of UDP-N-acetylglucosamine (UDP-GlcNAc) and thereby provides bacteria with UDP-N-acetylmannosamine (UDP-ManNAc), the activated donor of ManNAc residues. In Salmonella typhimurium (strain LT2 / SGSC1412 / ATCC 700720), this protein is UDP-N-acetylglucosamine 2-epimerase.